The primary structure comprises 146 residues: Hemoglobin subunit beta (146 aa).

The Globin domain occupies 2–146 (PFSAHEEKLI…VAAALSVEYY (145 aa)). Residues histidine 63 and histidine 92 each coordinate heme b.

This sequence belongs to the globin family. As to quaternary structure, heterotetramer of two alpha chains and two beta chains. When oxygenated in vitro, exists virtually only in polymeric form. When deoxygenated, forms tetramers, octamers and larger polymers. Red blood cells.

Involved in oxygen transport from the lung to the various peripheral tissues. The chain is Hemoglobin subunit beta from Paleosuchus palpebrosus (Cuvier's smooth-fronted caiman).